We begin with the raw amino-acid sequence, 374 residues long: Ribosomal RNA large subunit methyltransferase G (374 aa).

This sequence belongs to the methyltransferase superfamily. RlmG family.

The protein localises to the cytoplasm. The enzyme catalyses guanosine(1835) in 23S rRNA + S-adenosyl-L-methionine = N(2)-methylguanosine(1835) in 23S rRNA + S-adenosyl-L-homocysteine + H(+). In terms of biological role, specifically methylates the guanine in position 1835 (m2G1835) of 23S rRNA. The polypeptide is Ribosomal RNA large subunit methyltransferase G (Pseudomonas syringae pv. syringae (strain B728a)).